The following is a 453-amino-acid chain: Nuclear distribution protein nudF-2 (453 aa).

In terms of domain architecture, LisH spans glutamine 9 to glutamate 41. The stretch at serine 62–threonine 88 forms a coiled coil. A disordered region spans residues leucine 84–arginine 107. 7 WD repeats span residues serine 112–lysine 153, histidine 155–arginine 195, glycine 199–threonine 239, glycine 242–lysine 281, glycine 286–leucine 345, glycine 347–lysine 386, and alanine 391–arginine 449.

This sequence belongs to the WD repeat LIS1/nudF family. In terms of assembly, self-associates. Interacts with ro-11/nde1 and dynein.

It is found in the cytoplasm. The protein localises to the cytoskeleton. Its subcellular location is the spindle pole. In terms of biological role, positively regulates the activity of the minus-end directed microtubule motor protein dynein. May enhance dynein-mediated microtubule sliding by targeting dynein to the microtubule plus end. Required for nuclear migration during vegetative growth as well as development. Required for retrograde early endosome (EE) transport from the hyphal tip. Required for localization of dynein to the mitotic spindle poles. Recruits additional proteins to the dynein complex at SPBs. The protein is Nuclear distribution protein nudF-2 (nmp-1) of Neurospora crassa (strain ATCC 24698 / 74-OR23-1A / CBS 708.71 / DSM 1257 / FGSC 987).